Reading from the N-terminus, the 321-residue chain is MKLHNVLKNNNKEDVVSNIEQFGGNADWFNAARVLSESLPYIQQFSGETFIIKYGGAAMKDRKLAENFAHDIVLLKQLGINPIVVHGGGSKINEFLEKINKKSTFVNGLRVTDAETLEIVEMVLCGLVNKDITQLINKAGGNAIGLCGKDANLIEAKKVCYTYKENQSNNVEKILDMGFVGEPHEVNTDLLFFMEESDFIPVIAPVCSGENDLTYNVNADLVAGALANALAAAKLIILTNVPGVTDVNGNLLSEISVSNAESLIEQGIANAGMIPKLQTCIKVVKEGYGSAHIIDGRIPHVLLLELFTIHGTGTMVLNTDI.

Substrate-binding positions include 88-89 (GG), R110, and N216.

This sequence belongs to the acetylglutamate kinase family. ArgB subfamily.

The protein resides in the cytoplasm. It catalyses the reaction N-acetyl-L-glutamate + ATP = N-acetyl-L-glutamyl 5-phosphate + ADP. Its pathway is amino-acid biosynthesis; L-arginine biosynthesis; N(2)-acetyl-L-ornithine from L-glutamate: step 2/4. Catalyzes the ATP-dependent phosphorylation of N-acetyl-L-glutamate. In Ehrlichia chaffeensis (strain ATCC CRL-10679 / Arkansas), this protein is Acetylglutamate kinase.